A 250-amino-acid polypeptide reads, in one-letter code: Ubiquinone/menaquinone biosynthesis C-methyltransferase UbiE (250 aa).

S-adenosyl-L-methionine-binding positions include threonine 73, aspartate 94, 122 to 123 (NA), and serine 139.

The protein belongs to the class I-like SAM-binding methyltransferase superfamily. MenG/UbiE family.

It catalyses the reaction a 2-demethylmenaquinol + S-adenosyl-L-methionine = a menaquinol + S-adenosyl-L-homocysteine + H(+). It carries out the reaction a 2-methoxy-6-(all-trans-polyprenyl)benzene-1,4-diol + S-adenosyl-L-methionine = a 5-methoxy-2-methyl-3-(all-trans-polyprenyl)benzene-1,4-diol + S-adenosyl-L-homocysteine + H(+). It functions in the pathway quinol/quinone metabolism; menaquinone biosynthesis; menaquinol from 1,4-dihydroxy-2-naphthoate: step 2/2. Its pathway is cofactor biosynthesis; ubiquinone biosynthesis. Its function is as follows. Methyltransferase required for the conversion of demethylmenaquinol (DMKH2) to menaquinol (MKH2) and the conversion of 2-polyprenyl-6-methoxy-1,4-benzoquinol (DDMQH2) to 2-polyprenyl-3-methyl-6-methoxy-1,4-benzoquinol (DMQH2). This Francisella tularensis subsp. tularensis (strain FSC 198) protein is Ubiquinone/menaquinone biosynthesis C-methyltransferase UbiE.